Consider the following 3483-residue polypeptide: MRTDLPQTMQRATAVPVVFPNLTGRAVPPPRGSRTSQKCLVTYSIPLSTLGERCDALGVSVGYLSQSIWARLLSQYTGEPEVSFGAFLSESPIPEEERGSCLCKLWRKSAYSVEVAFSPGKTDDDVRRELENGPRGNRKDVYESVISVYSAESENPYLARAAADSEFIVHLEIMLNKRTDQVRLAVHYDPAFVTGDSALIIAREFLGILTFESLGSGRTTRYSNLQPEILSMCQPSGNAPVDISDRNLFVHHLFEKHAAETPENSCLEFLHDETDQVESWTFKKLNETSNRIAHLILQNGVARDEAVPVCLDKGPLYYACILACMKAGVPFTPIDPVAPVARKTFMIEELQARYVLSIPDRFDELGLDENVKILDLSNEESLGKLSPQNPQVPDLTERSLAYRLYTSGSTGQPKAVSLEVGAVVHAIQKSIALLPLRRDSRLLQFAAITFDMCYFDCFLAWTVGFTMVSASKRYLLGELEATVKRLQISFLDLTPSVAATLTASELPEVEMLYCIGEAMPTKIVEDWAGRCVNSYGPTEAAMLCTIVNVDKDIRAANFGQPFNGMSLYILDKDMPVILPRMAAGELCICGPQLAREYHRNEAKTASSFITLDSGLRLYRTGDLARMLADGTFEFIGRKDDQVKLRGFRIELGEVSAVLRDVHPLIKDVVALVLKHSDEQKEQLVTFLSFASRKNRLDPPSIQDCDPADWEDIERAARKVAEAALPQYMLPHIYFPINWIPLSAAAKVDKRSLGELFRRTDISTLGRRAEAGASDEVFDELSTKIRHVFAEASSSELETIGMDTTIYQLGLDSISALNVARSLKAIGVNASVLDIIECPTIRGLRDHVSGKKNPISASYHQDIFASFKQQHIDAVCSSTSVPREKVANVLPCSPMQEGILTQFLQSKGSLYYNAILFRLENGVNIECLEDSWIQVAEQNDVLRTGFVEHEVDGGHYAMITYKSASTSLVRKVQTQIPVEEFVKQVQKEEAQKALSNIALPPWSVTLVPGENASHMIFTALHAIYDAQTLQILLNDVNLFYHKTQPVLHSSPSSILKEMLKISRDKEAVASAAKYWKSVLQDCPITKFPVMTPLREDTGEFVYSYKKCDTTMKQVEDMCKKVGFSFGAVGQAVWAKLLAMYFGERDICFGTVVSGRTGSDNAEDVVFPCLTTIPMRVQLDGDNKALVAQIQGRLSKTLKFQHTPLRAIQKALGHPEQGLFDTIFVYQKSSNSNERLRPVWRELDAKATVEYPVSFEIEPTDDGHLGLRLTGRTDILPQEQMEIMVAQYEYCLLHMLQNQAVDAMDLGDVPQPILSDTPAEFDKLTCDVKFLHEFVSASTKRHPSKLALEFATEIQGNNVTKDSWTYRQFDDMGNKIANFLLQHGAATGDLIGICFDKTPQAYFGILGILKAGCAFVALDFSAPVQRRSFIVQDAKIRIVLTMAQFAKDFDGISGLNVYSLDSLQTLTRYFSTEEPEIIDLTPDHLSYVLYTSGTTGTPKGCRITHDNAVQAMLSFQTLFKGHWDENSRFLQFASLHFDVSVLEQYWSWSVGVCLTGAPRDLIFQDLGNAIRALQITHIDLTPSLARLITPEDCPTLCRGVFITGGEKLKQDVLDAWGEENVIYNGYGPTEATIGVTMYPRVPRNGRPSNIGPQFVNVGSMVLKPKTMIPVLQGAVGELCVTGALVGDGYLNRQDLTEEKFPWVNGKRMYRTGDLVRQLHNGCFDYLGRADDQVKLRGQRLELGEINETIRSADKDVAEIVTLVCQHGQQQVQQLVSFVSFKSNTDGRGSPAPTQLLHSFPDAETGSRILQACQSRLPVYMVPTYILPITKLPLTVNNKVDERTLRNLFANTSMEVIQSFEEMSSGDEELSETEKVIRDTLGEVSIDTNSVSKNVSFFQLGLDSVSIVGFSNRLRRKGFQNIEVSLVMQNSTIASLAKALSSANGLAAGENIQNALQSIKAFNIEHGFEVCSSLGLNEEDIESIKPCTPLQEGMIARALNSDVPLYYNTFCFEVSRNTTPEALKKAWQEIVDRTDILRTCFCETSDGIAQVVLKKSEVQWKSVHGSQHEPLGNSRTKPLEMMDFAIPPVSLEYISGQTNFLRLSLFHALYDGTSMPMILSDIETLLSGHQPAKRMQFTDAVPRILSLDTAAAKKFWVDHFEEAKTSLLEPKSQVKELKEQIISHTLEASKSDVERVARDLGCTTQALFQVACLQALVRVQEKQVVMGIITSGRSFTVDGIDTCIGPLFNSIPCHLPISKGATWKEYAQKAHTFNISSIPFHHTPLRQISKWVGQGSKPLFDVLFVFQPATPLAEDRALREIDSAAILDYPVALEIQQGTDGRYTISVSSSSAYLDESENSLLLKSIVRGITDLLKNPEQEVAVLREIEGDVFHSKSEENQVKRPATPQPANFVWTEAAVSIRRELAILTGVEESAITEKSSIYQVGLDSVEAIRLSSRLLKKNIHLKVSDIMREATIERMVVYLSSTKSQTSSSDVKKNTLQKFETSAQKALKLSNDSLKKVESILPTTPLQDIMIAESIGSDFALYFNHDVLELQRGINIKKLQAAWKAVIKKNSILRTTFEEAHDLELGTSTDYIQIVWKDLSLEWDVVETTSEHESGRVDELMASHKSRKAPLALGIVRSDKRVLMVLSISHALYDGRSIGLLLDDVAREYDKQSTVRPDYKPFLEKVLNQDSKSSLGFWKHLLSNAKPRTFPVVGNDGQVWKAEQSSKVSVAKFAQFCREQKISEPVLGQACLSLLLSDIFSQDDVVFGTVISGRETEESEQYMFPTMNTIPVRAVLHGNVSDVLNSMQKSYSRSLEHQFVPLRDIQKNVCEPGQRMFDALFVYQKNKGSEEGVKLWRSIGGASQIEYAIAVEIEVNGDDLTWRISASETAMASHEAEDTLDTLDAMLQKIIGNPLWGYQRFTRSQLGNNLRAKLQSEMTRSVDVEESPSESDNYQNLERQVIKAISAIAKAAEQDIKPSTSIFHLGIDSISAIRLASELRKHSIFIAVSEILRESTVRKICLFLDKKQHTPNSSQKPTKQPEISPVQFKKVVAAAGLKNADVEYVSPATSGQIFLIKAWESSEGRIFLPTFSFKSAEVLRSPRLKRALDRLVSANPILRTSFAADGDDIFQIVHRQASPSFRSTYFDSDSVLESSLQQINQEEQVREYDMSTPSIRVHLVSSRNESYVFVTLHHALYDAFTLPTLLSQLSDLYKNEEMVLPKSSKSVLAPSSSSPEAKDFWIRYFTNSESTPLPSKQDVGVTERVELYTERQVPSGSQIDAACRKHGISLHSLSIACFAQIISKVVQKDSPIFGIYLSNRHLSDASEGVQTMPTLNMVPLMVKGASKSPLIDLAKQVQEDLLKISTSDAATTNLMEIYQWTGIRIDSFVNFLKEDKLDGNSRDGGLFERFELSAGTPAARDFSIPGALRSKDTVIQTNLDLEMALRNGFVDVGLFAAKKYLDNIDLRKISEEIKEGLMHFE.

Residues 281-669 (TFKKLNETSN…DVHPLIKDVV (389 aa)) form an adenylation 1 region. A Carrier 1 domain is found at 775–851 (EVFDELSTKI…GLRDHVSGKK (77 aa)). Ser-812 bears the O-(pantetheine 4'-phosphoryl)serine mark. Residues 886–1297 (ANVLPCSPMQ…YCLLHMLQNQ (412 aa)) form a condensation 1 region. The segment at 1363-1758 (TYRQFDDMGN…SADKDVAEIV (396 aa)) is adenylation 2. The 77-residue stretch at 1865 to 1941 (EELSETEKVI…SLAKALSSAN (77 aa)) folds into the Carrier 2 domain. The residue at position 1901 (Ser-1901) is an O-(pantetheine 4'-phosphoryl)serine. A condensation 2 region spans residues 1981–2379 (IKPCTPLQEG…LLKNPEQEVA (399 aa)). The Carrier 3 domain maps to 2412–2485 (TEAAVSIRRE…RMVVYLSSTK (74 aa)). An O-(pantetheine 4'-phosphoryl)serine modification is found at Ser-2446. Residues 2520–2917 (ESILPTTPLQ…MLQKIIGNPL (398 aa)) are condensation 3. Residues 2954–3030 (DNYQNLERQV…KICLFLDKKQ (77 aa)) enclose the Carrier 4 domain. The residue at position 2991 (Ser-2991) is an O-(pantetheine 4'-phosphoryl)serine. The interval 3084 to 3368 (SEGRIFLPTF…VQEDLLKIST (285 aa)) is condensation 4.

It belongs to the NRP synthetase family.

It functions in the pathway siderophore biosynthesis. Functionally, nonribosomal peptide synthetase; part of the gene cluster that mediates the biosynthesis of desferriferrichrome that chelates Fe(3+) to form ferrichrome. Fe(3+) is a key factor for induction of trap formation and the fungus uses the iron chelating desferriferrichrome to sequester Fe(3+) to inhibit trap formation and increase nematicidal activity. The biosynthesis of desferriferrichrome requires the action of the L-ornithine N(5)-oxygenase (LOO) Ao414 that hydroxylates L-ornithine at N(5), resulting in the formation of N(5)-hydroxyl-L-ornithine, which is subsequently N-acetylated to yield N(5)-acetyl-N(5)-hydroxy-L-ornithine (L-AHO). L-AHO harbors one hydroxamate moiety, which is the key core responsible for chelating iron. Then, L-AHO is further condensated with glycines to form desferriferrichrome through the NRPS protein Ao415. The protein is Nonribosomal peptide synthetase Ao415 of Arthrobotrys oligospora (strain ATCC 24927 / CBS 115.81 / DSM 1491) (Nematode-trapping fungus).